The chain runs to 326 residues: MGLGSRLDACLAREVAGGDRPIAAVLAALAEAAAGTGRLLRDGGADAGPDDLDAAVQARFVAALRETPTALLALPEAEAPLALMPDGAIAVALTPLDGRENLAGNQPAGTLFSLRPAAGAPFREPGRIQVAAGFVTYGPRTELAVTWGAGARIFTLDPSGAFRLSREAVAIPPTSTLYAIDAANARFWEAPMRAFVEDCLRGSEGPRGQDFAMGWCASLAVGAQRALCRGGVHILPGETRRGRANGATRLIHEAAPIALVMEAAGGAATDGRDARILDLPTLDLQQRTPLVFGSAEEVACVGKYHDGRRHTGARSPLFGQRGLLRA.

The protein belongs to the FBPase class 1 family. As to quaternary structure, homotetramer.

The protein localises to the cytoplasm. It catalyses the reaction beta-D-fructose 1,6-bisphosphate + H2O = beta-D-fructose 6-phosphate + phosphate. It functions in the pathway carbohydrate biosynthesis; gluconeogenesis. The sequence is that of Fructose-1,6-bisphosphatase class 1 from Methylobacterium sp. (strain 4-46).